Reading from the N-terminus, the 178-residue chain is Inorganic pyrophosphatase (178 aa).

Lys-30, Arg-44, and Tyr-56 together coordinate substrate. Mg(2+) is bound by residues Asp-66, Asp-71, and Asp-103. Substrate is bound at residue Tyr-140.

The protein belongs to the PPase family. Homohexamer. It depends on Mg(2+) as a cofactor.

The protein localises to the cytoplasm. It carries out the reaction diphosphate + H2O = 2 phosphate + H(+). In terms of biological role, catalyzes the hydrolysis of inorganic pyrophosphate (PPi) forming two phosphate ions. This chain is Inorganic pyrophosphatase, found in Pyrococcus furiosus (strain ATCC 43587 / DSM 3638 / JCM 8422 / Vc1).